We begin with the raw amino-acid sequence, 676 residues long: MAAASSPPRAERKRWGWGRLPGARRGSAGLAKKCPFSLELAEGGPAGGALYAPIAPGAPGPAPPASPAAPAAPPVASDLGPRPPVSLDPRVSIYSTRRPVLARTHVQGRVYNFLERPTGWKCFVYHFAVFLIVLVCLIFSVLSTIEQYAALATGTLFWMEIVLVVFFGTEYVVRLWSAGCRSKYVGLWGRLRFARKPISIIDLIVVVASMVVLCVGSKGQVFATSAIRGIRFLQILRMLHVDRQGGTWRLLGSVVFIHRQELITTLYIGFLGLIFSSYFVYLAEKDAVNESGRVEFGSYADALWWGVVTVTTIGYGDKVPQTWVGKTIASCFSVFAISFFALPAGILGSGFALKVQQKQRQKHFNRQIPAAASLIQTAWRCYAAENPDSSTWKIYIRKAPRSHTLLSPSPKPKKSVVVKKKKFKLDKDNGVTPGEKMLTVPHITCDPPEERRLDHFSVDGYDSSVRKSPTLLEVSMPHFMRTNSFAEDLDLEGETLLTPITHISQLREHHRATIKVIRRMQYFVAKKKFQQARKPYDVRDVIEQYSQGHLNLMVRIKELQRRLDQSIGKPSLFISVSEKSKDRGSNTIGARLNRVEDKVTQLDQRLALITDMLHQLLSLHGGSTPGSGGPPREGGAHITQPCGSGGSVDPELFLPSNTLPTYEQLTVPRRGPDEGS.

Disordered stretches follow at residues 1 to 28 (MAAA…RGSA) and 62 to 84 (APPA…PRPP). The Cytoplasmic portion of the chain corresponds to 1 to 120 (MAAASSPPRA…YNFLERPTGW (120 aa)). Serine 27 is modified (phosphoserine; by PKA). The segment covering 62–73 (APPASPAAPAAP) has biased composition (pro residues). The helical transmembrane segment at 121–142 (KCFVYHFAVFLIVLVCLIFSVL) threads the bilayer. Residues 143 to 153 (STIEQYAALAT) lie on the Extracellular side of the membrane. Residues 154–176 (GTLFWMEIVLVVFFGTEYVVRLW) traverse the membrane as a helical segment. Topologically, residues 177–192 (SAGCRSKYVGLWGRLR) are cytoplasmic. The helical transmembrane segment at 193–218 (FARKPISIIDLIVVVASMVVLCVGSK) threads the bilayer. The Extracellular segment spans residues 219–226 (GQVFATSA). Residues 227–242 (IRGIRFLQILRMLHVD) traverse the membrane as a helical; Voltage-sensor segment. The tract at residues 238-246 (MLHVDRQGG) is interaction with KCNE3. Over 243 to 260 (RQGGTWRLLGSVVFIHRQ) the chain is Cytoplasmic. Glutamine 244 lines the a 1,2-diacyl-sn-glycero-3-phospho-(1D-myo-inositol-4,5-bisphosphate) pocket. The helical transmembrane segment at 261–283 (ELITTLYIGFLGLIFSSYFVYLA) threads the bilayer. The Extracellular portion of the chain corresponds to 284–299 (EKDAVNESGRVEFGSY). N-linked (GlcNAc...) asparagine glycosylation occurs at asparagine 289. Positions 300–320 (ADALWWGVVTVTTIGYGDKVP) form an intramembrane region, pore-forming. Over 321–322 (QT) the chain is Extracellular. Residues 323–348 (WVGKTIASCFSVFAISFFALPAGILG) form a helical membrane-spanning segment. At 349-676 (SGFALKVQQK…VPRRGPDEGS (328 aa)) the chain is on the cytoplasmic side. The interaction with CALM stretch occupies residues 370 to 382 (AAASLIQTAWRCY). Serine 407 and serine 409 each carry phosphoserine. The interval 515 to 529 (KVIRRMQYFVAKKKF) is interaction with CALM; calcium-dependent. Positions 535-572 (PYDVRDVIEQYSQGHLNLMVRIKELQRRLDQSIGKPSL) are interaction with KCNE1 C-terminus. Positions 585-621 (SNTIGARLNRVEDKVTQLDQRLALITDMLHQLLSLHG) form a coiled coil. Residues 588–616 (IGARLNRVEDKVTQLDQRLALITDMLHQL) form an interaction with AKAP9 region. The segment at 589-620 (GARLNRVEDKVTQLDQRLALITDMLHQLLSLH) is C-terminal assembly domain (tetramerization). A disordered region spans residues 620 to 676 (HGGSTPGSGGPPREGGAHITQPCGSGGSVDPELFLPSNTLPTYEQLTVPRRGPDEGS). Residues 623-632 (STPGSGGPPR) are compositionally biased toward gly residues. The segment covering 655 to 664 (PSNTLPTYEQ) has biased composition (polar residues).

Belongs to the potassium channel family. KQT (TC 1.A.1.15) subfamily. Kv7.1/KCNQ1 sub-subfamily. As to quaternary structure, tetramer. Heterotetramer with KCNE1; targets to the membrane raft. Interacts (via C-terminus) with calmodulin; forms a heterooctameric structure (with 4:4 KCNQ1:CALM stoichiometry); the interaction is calcium-independent, constitutive, participates in the proper assembly of a functional channel and also acts a calcium sensor. KCNQ1 channels interact more strongly with Ca(2+)-CALM than with apoCALM. Interacts with AKAP9; targets protein kinase A (PKA) catalytic and regulatory subunits and protein phosphatase 1 (PP1) to the KCNQ1-KCNE1 complex, allowing PKA-mediated phosphorylation and increase of delayed rectifier potassium channel activity. Interacts with KCNE2; forms a heterooligomer complex that targets to the membrane raft and leading to currents with an apparently instantaneous activation, a rapid deactivation process and a linear current-voltage relationship and decreases the amplitude of the outward current. Interacts with AP2M1; mediates estrogen-induced internalization via clathrin-coated vesicles. Interacts with NEDD4L; promotes internalization and decreases I(Ks) currents. Interacts with USP2; counteracts the NEDD4L-specific down-regulation of I(Ks) and restore plasma membrane localization. Heterotetramer with KCNQ5; has a voltage-gated potassium channel activity. Interacts with KCNE3; four KCNE3 molecules are bound to one KCNQ1 tetramer (4:4 KCNQ1:KCNE3 stoichiometry); alters membrane raft localization; affects KCNQ1 structure and gating properties. Interacts with KCNE4; impairs KCNQ1 localization in lipid rafts and inhibits voltage-gated potassium channel activity. Interacts with KCNE5; impairs KCNQ1 localization in lipid rafts and only conducts current upon strong and continued depolarization. Interacts with SLC5A3; forms coregulatory channel-transporter complexes that modulate Na(+)-coupled myo-inositol influx through the transporter. Phosphorylation at Ser-27 by PKA; increases delayed rectifier potassium channel activity of the KCNQ1-KCNE1 complex through a macromolecular complex that includes PKA, PP1, and the targeting protein AKAP9. Post-translationally, ubiquitinated by NEDD4L; promotes internalization. The ubiquitinylated form is internalized through a clathrin-mediated endocytosis by interacting with AP2M1 and is recycled back to the cell membrane via RAB4A and RAB11A. In terms of processing, deubiquitinated by USP2; counteracts the NEDD4L-specific down-regulation of I(Ks) and restores the membrane localization. As to expression, abundantly expressed in heart, pancreas, prostate, kidney, small intestine and peripheral blood leukocytes. Less abundant in placenta, lung, spleen, colon, thymus, testis and ovaries.

The protein localises to the cell membrane. Its subcellular location is the cytoplasmic vesicle membrane. It localises to the early endosome. It is found in the membrane raft. The protein resides in the endoplasmic reticulum. The protein localises to the basolateral cell membrane. Its subcellular location is the apical cell membrane. It carries out the reaction K(+)(in) = K(+)(out). With respect to regulation, PIP2 molecule is essential to activate KCNQ channels by inducing the coupling of the voltage-sensing domain (VSD) and the pore-forming domain (PD). Upon channel activation, PIP2 disrupts the VSD-calmodulin/CALM interactions, causing the release of CALM from the VSD which triggers the opening of the gate. Calcium potentiates KCNQ1 channel current through calcium-bound CALM. Calcium-bound CALM competes with PIP2 to stabilize the channel open state. Pore-forming subunit of the voltage-gated potassium (Kv) channel involved in the regulation of cardiomyocyte excitability and important in normal development and functions of myocardium, inner ear, stomach and colon. Associates with KCNE beta subunits that modulates current kinetics. Induces a voltage-dependent current by rapidly activating and slowly deactivating potassium-selective outward current. Also promotes a delayed voltage activated potassium current showing outward rectification characteristic. During beta-adrenergic receptor stimulation, participates in cardiac repolarization by associating with KCNE1 to form the I(Ks) cardiac potassium current that increases the amplitude and slows down the activation kinetics of outward potassium current I(Ks). Muscarinic agonist oxotremorine-M strongly suppresses KCNQ1/KCNE1 current. When associated with KCNE3, forms the potassium channel that is important for cyclic AMP-stimulated intestinal secretion of chloride ions. This interaction with KCNE3 is reduced by 17beta-estradiol, resulting in the reduction of currents. During conditions of increased substrate load, maintains the driving force for proximal tubular and intestinal sodium ions absorption, gastric acid secretion, and cAMP-induced jejunal chloride ions secretion. Allows the provision of potassium ions to the luminal membrane of the secretory canaliculus in the resting state as well as during stimulated acid secretion. When associated with KCNE2, forms a heterooligomer complex leading to currents with an apparently instantaneous activation, a rapid deactivation process and a linear current-voltage relationship and decreases the amplitude of the outward current. When associated with KCNE4, inhibits voltage-gated potassium channel activity. When associated with KCNE5, this complex only conducts current upon strong and continued depolarization. Also forms a heterotetramer with KCNQ5; has a voltage-gated potassium channel activity. Binds with phosphatidylinositol 4,5-bisphosphate. KCNQ1-KCNE2 channel associates with Na(+)-coupled myo-inositol symporter in the apical membrane of choroid plexus epithelium and regulates the myo-inositol gradient between blood and cerebrospinal fluid with an impact on neuron excitability. Its function is as follows. Non-functional alone but modulatory when coexpressed with the full-length isoform 1. The protein is Potassium voltage-gated channel subfamily KQT member 1 of Homo sapiens (Human).